A 96-amino-acid chain; its full sequence is Putative pterin-4-alpha-carbinolamine dehydratase (96 aa).

The protein belongs to the pterin-4-alpha-carbinolamine dehydratase family.

The enzyme catalyses (4aS,6R)-4a-hydroxy-L-erythro-5,6,7,8-tetrahydrobiopterin = (6R)-L-erythro-6,7-dihydrobiopterin + H2O. In Novosphingobium aromaticivorans (strain ATCC 700278 / DSM 12444 / CCUG 56034 / CIP 105152 / NBRC 16084 / F199), this protein is Putative pterin-4-alpha-carbinolamine dehydratase.